Reading from the N-terminus, the 169-residue chain is UPF0303 protein BCAN_A1444 (169 aa).

This sequence belongs to the UPF0303 family.

The chain is UPF0303 protein BCAN_A1444 from Brucella canis (strain ATCC 23365 / NCTC 10854 / RM-666).